The following is a 330-amino-acid chain: Tryptophan--tRNA ligase (330 aa).

Residues 9 to 11 and 17 to 18 each bind ATP; these read QPT and GN. The 'HIGH' region signature appears at 10-18; sequence PTGDPHIGN. Asp-136 is an L-tryptophan binding site. ATP contacts are provided by residues 148-150, Ile-187, and 195-199; these read GED and KMSKS. Positions 195-199 match the 'KMSKS' region motif; the sequence is KMSKS.

The protein belongs to the class-I aminoacyl-tRNA synthetase family. As to quaternary structure, homodimer.

The protein resides in the cytoplasm. It carries out the reaction tRNA(Trp) + L-tryptophan + ATP = L-tryptophyl-tRNA(Trp) + AMP + diphosphate + H(+). Functionally, catalyzes the attachment of tryptophan to tRNA(Trp). The protein is Tryptophan--tRNA ligase of Deinococcus radiodurans (strain ATCC 13939 / DSM 20539 / JCM 16871 / CCUG 27074 / LMG 4051 / NBRC 15346 / NCIMB 9279 / VKM B-1422 / R1).